The primary structure comprises 161 residues: MLVILAFIILFHITSAILLFIATINNAWRIKGDFSMDLWYNCNTTACYDIPKSATYDAAYLQAVQATMILATILCCVGFFVFILQLFRLKQGERFVFTAIIQLLSAFCVMTGASIYTAEGLTFNGQEFKNAEYGYSFVVAWVAFPMTLLSGLMYLVLRKRK.

4 helical membrane-spanning segments follow: residues 1–21 (MLVI…LLFI), 67–87 (TMIL…LQLF), 95–115 (FVFT…GASI), and 137–157 (FVVA…YLVL).

This sequence belongs to the PMP-22/EMP/MP20 family. As to expression, expressed in the arches, orbits, pectoral fins, vessels, pronephric renal tubules, and glomeruli.

Its subcellular location is the golgi apparatus membrane. The protein localises to the cell membrane. It is found in the apical cell membrane. The protein resides in the membrane raft. It localises to the cytoplasm. Its subcellular location is the nucleus. The protein localises to the perinuclear region. Functionally, functions as a key regulator of cell membrane composition by regulating protein surface expression. Also, plays a role in regulation of processes including cell migration, cell proliferation, cell contraction and cell adhesion. May play a role in glomerular filtration. The protein is Epithelial membrane protein 2 (emp2) of Danio rerio (Zebrafish).